Consider the following 397-residue polypeptide: MAKEKFDRSLPHVNVGTIGHVDHGKTTLTAALTRVCSEVFGSAIVEFDKIDSAPEEKARGITINTAHVEYNSTIRHYAHVDCPGHADYVKNMITGAAQMDGAILVCSAADGPMPQTREHILLSRQVGVPYIVVFLNKADLVDDAELLELVEMEVRDLLSTYDFPGDDTPIIIGSARMALEGKDDNEMGTTAVKKLVETLDSYIPEPVRAIDQPFLMPIEDVFSISGRGTVVTGRIERGIVRVQDPLEIVGLRDTTTTTCTGVEMFRKLLDEGRAGENCGVLLRGTKRDDVERGQVLVKPGSVKPHTKFTAEVYVLSKEEGGRHTPFFKGYRPQFYFRTTDVTGNCELPEGVEMVMPGDNIQMTVTLIKTIAMEDGLRFAIREGGRTVGAGVVAKIIE.

Residues 10-207 (LPHVNVGTIG…TLDSYIPEPV (198 aa)) form the tr-type G domain. Residues 19–26 (GHVDHGKT) are G1. 19-26 (GHVDHGKT) serves as a coordination point for GTP. T26 lines the Mg(2+) pocket. The tract at residues 60–64 (GITIN) is G2. Residues 81–84 (DCPG) form a G3 region. GTP contacts are provided by residues 81 to 85 (DCPGH) and 136 to 139 (NKAD). The interval 136 to 139 (NKAD) is G4. The segment at 174–176 (SAR) is G5.

The protein belongs to the TRAFAC class translation factor GTPase superfamily. Classic translation factor GTPase family. EF-Tu/EF-1A subfamily. As to quaternary structure, monomer.

It localises to the cytoplasm. It catalyses the reaction GTP + H2O = GDP + phosphate + H(+). In terms of biological role, GTP hydrolase that promotes the GTP-dependent binding of aminoacyl-tRNA to the A-site of ribosomes during protein biosynthesis. The sequence is that of Elongation factor Tu from Pseudomonas putida (strain ATCC 700007 / DSM 6899 / JCM 31910 / BCRC 17059 / LMG 24140 / F1).